The chain runs to 1339 residues: Receptor tyrosine-protein kinase erbB-3 (1339 aa).

A signal peptide spans methionine 1–glycine 19. Residues serine 20–histidine 641 are Extracellular-facing. Asparagine 126 is a glycosylation site (N-linked (GlcNAc...) asparagine). 11 cysteine pairs are disulfide-bonded: cysteine 186–cysteine 194, cysteine 190–cysteine 202, cysteine 210–cysteine 218, cysteine 214–cysteine 226, cysteine 227–cysteine 235, cysteine 231–cysteine 243, cysteine 246–cysteine 255, cysteine 259–cysteine 286, cysteine 290–cysteine 301, cysteine 305–cysteine 320, and cysteine 323–cysteine 327. The N-linked (GlcNAc...) asparagine glycan is linked to asparagine 250. 5 N-linked (GlcNAc...) asparagine glycosylation sites follow: asparagine 353, asparagine 408, asparagine 414, asparagine 437, and asparagine 469. Intrachain disulfides connect cysteine 500–cysteine 509, cysteine 504–cysteine 517, cysteine 520–cysteine 529, cysteine 533–cysteine 549, cysteine 552–cysteine 565, cysteine 556–cysteine 573, cysteine 576–cysteine 585, cysteine 589–cysteine 610, cysteine 613–cysteine 621, and cysteine 617–cysteine 629. Asparagine 522 is a glycosylation site (N-linked (GlcNAc...) asparagine). Residue asparagine 566 is glycosylated (N-linked (GlcNAc...) asparagine). Asparagine 616 is a glycosylation site (N-linked (GlcNAc...) asparagine). Residues leucine 642–leucine 662 form a helical membrane-spanning segment. At tyrosine 663–isoleucine 1339 the chain is on the cytoplasmic side. Position 684 is a phosphoserine (serine 684). Residues leucine 707–threonine 964 enclose the Protein kinase domain. Residues leucine 713–valine 721, lysine 740, glutamine 786–leucine 788, and aspartate 832–asparagine 837 contribute to the ATP site. The active-site Proton acceptor is the aspartate 832. Serine 980 bears the Phosphoserine mark. Disordered regions lie at residues leucine 1028–methionine 1052, arginine 1077–tyrosine 1156, and serine 1181–glycine 1212. The segment covering threonine 1185–glutamate 1195 has biased composition (acidic residues).

Belongs to the protein kinase superfamily. Tyr protein kinase family. EGF receptor subfamily. As to quaternary structure, monomer and homodimer. Heterodimer with each of the other ERBB receptors (Potential). Interacts with CSPG5, PA2G4, GRB7 and MUC1. Interacts with MYOC. Found in a ternary complex with NRG1 and ITGAV:ITGB3 or ITGA6:ITGB4. Post-translationally, autophosphorylated. Ligand-binding increases phosphorylation on tyrosine residues and promotes its association with the p85 subunit of phosphatidylinositol 3-kinase. In terms of tissue distribution, in the muscle, expression localizes to the synaptic sites of muscle fibers.

It localises to the membrane. The catalysed reaction is L-tyrosyl-[protein] + ATP = O-phospho-L-tyrosyl-[protein] + ADP + H(+). Its function is as follows. Tyrosine-protein kinase that plays an essential role as cell surface receptor for neuregulins. Binds to neuregulin-1 (NRG1) and is activated by it; ligand-binding increases phosphorylation on tyrosine residues and promotes its association with the p85 subunit of phosphatidylinositol 3-kinase. May also be activated by CSPG5. Involved in the regulation of myeloid cell differentiation. The protein is Receptor tyrosine-protein kinase erbB-3 (Erbb3) of Mus musculus (Mouse).